Consider the following 124-residue polypeptide: Prefoldin subunit beta (124 aa).

It belongs to the prefoldin subunit beta family. Heterohexamer of two alpha and four beta subunits.

It localises to the cytoplasm. Molecular chaperone capable of stabilizing a range of proteins. Seems to fulfill an ATP-independent, HSP70-like function in archaeal de novo protein folding. This Pyrobaculum arsenaticum (strain DSM 13514 / JCM 11321 / PZ6) protein is Prefoldin subunit beta.